The chain runs to 258 residues: Ribonuclease HII (258 aa).

The segment at 1-20 is disordered; sequence MRVAPSGGPPHHHAMIRATP. A compositionally biased stretch (basic residues) spans 10 to 20; it reads PHHHAMIRATP. In terms of domain architecture, RNase H type-2 spans 48 to 236; it reads WPVAGCDEVG…VVAARERHRA (189 aa). Positions 54, 55, and 145 each coordinate a divalent metal cation.

It belongs to the RNase HII family. Mn(2+) is required as a cofactor. The cofactor is Mg(2+).

The protein localises to the cytoplasm. The catalysed reaction is Endonucleolytic cleavage to 5'-phosphomonoester.. In terms of biological role, endonuclease that specifically degrades the RNA of RNA-DNA hybrids. This chain is Ribonuclease HII, found in Nitrobacter winogradskyi (strain ATCC 25391 / DSM 10237 / CIP 104748 / NCIMB 11846 / Nb-255).